Reading from the N-terminus, the 1220-residue chain is Deubiquitinating protein VCPIP1 (1220 aa).

Over residues 1 to 19 (MSQPPPPPPLPPPPPPPEA) the composition is skewed to pro residues. The tract at residues 1 to 40 (MSQPPPPPPLPPPPPPPEAPQTSSSLAAAASPGGLSKRRD) is disordered. Positions 20 to 35 (PQTSSSLAAAASPGGL) are enriched in low complexity. The OTU domain maps to 207-360 (LIPVHVDGDG…RNHYIPLVGI (154 aa)). Aspartate 215 is an active-site residue. The active-site Nucleophile is the cysteine 218. Histidine 353 is an active-site residue. Residue lysine 407 is modified to N6-acetyllysine. Disordered regions lie at residues 724–778 (SVMQ…KIRI) and 988–1008 (EATTRSRESSPSHGLLKLGSG). Residues serine 746 and serine 756 each carry the phosphoserine modification. Residues 754 to 770 (PSSAPATPTKAPYSPTT) show a composition bias toward low complexity. At threonine 762 the chain carries Phosphothreonine. Phosphoserine is present on residues serine 767, serine 993, serine 997, and serine 1076. Disordered regions lie at residues 1113–1140 (SSIQASMDKHLRDQSAEQAPSDLSQRKV) and 1185–1220 (FATRSKAQKENSMEEPEEMDSQDAETTNTTEPMDHS). A phosphoserine mark is found at serine 1196 and serine 1205. Acidic residues predominate over residues 1197 to 1207 (MEEPEEMDSQD). Residues 1208–1220 (AETTNTTEPMDHS) are compositionally biased toward polar residues.

Binds VCP and the ternary complex containing STX5A, NSFL1C and VCP. Post-translationally, phosphorylated at Ser-1205 by ATM or ATR following induction of covalent DNA-protein cross-links (DPCs).

It localises to the nucleus. The protein localises to the cytoplasm. It is found in the endoplasmic reticulum. Its subcellular location is the golgi apparatus. The protein resides in the golgi stack. It catalyses the reaction Thiol-dependent hydrolysis of ester, thioester, amide, peptide and isopeptide bonds formed by the C-terminal Gly of ubiquitin (a 76-residue protein attached to proteins as an intracellular targeting signal).. In terms of biological role, deubiquitinating enzyme involved in DNA repair and reassembly of the Golgi apparatus and the endoplasmic reticulum following mitosis. Necessary for VCP-mediated reassembly of Golgi stacks after mitosis. Plays a role in VCP-mediated formation of transitional endoplasmic reticulum (tER). Mediates dissociation of the ternary complex containing STX5A, NSFL1C and VCP. Also involved in DNA repair following phosphorylation by ATM or ATR: acts by catalyzing deubiquitination of SPRTN, thereby promoting SPRTN recruitment to chromatin and subsequent proteolytic cleavage of covalent DNA-protein cross-links (DPCs). Hydrolyzes 'Lys-11'- and 'Lys-48'-linked polyubiquitin chains. In Mus musculus (Mouse), this protein is Deubiquitinating protein VCPIP1.